The following is a 201-amino-acid chain: Holliday junction branch migration complex subunit RuvA (201 aa).

The interval 1-65 is domain I; the sequence is MIAYIEGRVA…EDALELYGFS (65 aa). Residues 66–143 are domain II; that stretch reads GWDERQTFLV…KVESLPASAG (78 aa). The interval 143 to 147 is flexible linker; that stretch reads GLAAG. The segment at 148–201 is domain III; that stretch reads VPGSVLRDAVQALGNLGYAEEEAAPVLKNILKQDPDLDVSEALRAALKALAKAR.

Belongs to the RuvA family. Homotetramer. Forms an RuvA(8)-RuvB(12)-Holliday junction (HJ) complex. HJ DNA is sandwiched between 2 RuvA tetramers; dsDNA enters through RuvA and exits via RuvB. An RuvB hexamer assembles on each DNA strand where it exits the tetramer. Each RuvB hexamer is contacted by two RuvA subunits (via domain III) on 2 adjacent RuvB subunits; this complex drives branch migration. In the full resolvosome a probable DNA-RuvA(4)-RuvB(12)-RuvC(2) complex forms which resolves the HJ.

It localises to the cytoplasm. The RuvA-RuvB-RuvC complex processes Holliday junction (HJ) DNA during genetic recombination and DNA repair, while the RuvA-RuvB complex plays an important role in the rescue of blocked DNA replication forks via replication fork reversal (RFR). RuvA specifically binds to HJ cruciform DNA, conferring on it an open structure. The RuvB hexamer acts as an ATP-dependent pump, pulling dsDNA into and through the RuvAB complex. HJ branch migration allows RuvC to scan DNA until it finds its consensus sequence, where it cleaves and resolves the cruciform DNA. The polypeptide is Holliday junction branch migration complex subunit RuvA (Oleidesulfovibrio alaskensis (strain ATCC BAA-1058 / DSM 17464 / G20) (Desulfovibrio alaskensis)).